We begin with the raw amino-acid sequence, 127 residues long: Mitochondrial pyruvate carrier 2 (127 aa).

Residues serine 2–threonine 40 are Mitochondrial matrix-facing. A helical membrane pass occupies residues valine 41–alanine 61. Over arginine 62–serine 72 the chain is Mitochondrial intermembrane. Residues alanine 73–isoleucine 90 form a helical membrane-spanning segment. The Mitochondrial matrix portion of the chain corresponds to proline 91–serine 95. A helical transmembrane segment spans residues leucine 96–tryptophan 115. The Mitochondrial intermembrane segment spans residues arginine 116–lysine 127.

This sequence belongs to the mitochondrial pyruvate carrier (MPC) (TC 2.A.105) family. As to quaternary structure, homodimer. Homooligomer. Forms heterodimers with MPC1 and MPC1L. The heterodimer is the more stable and dominant form.

Its subcellular location is the mitochondrion inner membrane. It catalyses the reaction pyruvate(out) + H(+)(out) = pyruvate(in) + H(+)(in). In terms of biological role, mediates the uptake of pyruvate into mitochondria. This Homo sapiens (Human) protein is Mitochondrial pyruvate carrier 2 (MPC2).